The primary structure comprises 126 residues: uncharacterized protein (126 aa).

The N-terminal stretch at methionine 1–methionine 23 is a signal peptide.

This is an uncharacterized protein from Archaeoglobus fulgidus (strain ATCC 49558 / DSM 4304 / JCM 9628 / NBRC 100126 / VC-16).